The chain runs to 373 residues: 8-amino-7-oxononanoate synthase (373 aa).

Position 16 (Arg-16) interacts with substrate. 93-94 (GF) provides a ligand contact to pyridoxal 5'-phosphate. His-118 is a substrate binding site. Residues Ser-165, 190-193 (DEAH), and 222-225 (TFSK) each bind pyridoxal 5'-phosphate. The residue at position 225 (Lys-225) is an N6-(pyridoxal phosphate)lysine. Thr-334 is a binding site for substrate.

The protein belongs to the class-II pyridoxal-phosphate-dependent aminotransferase family. BioF subfamily. In terms of assembly, homodimer. It depends on pyridoxal 5'-phosphate as a cofactor.

The catalysed reaction is 6-carboxyhexanoyl-[ACP] + L-alanine + H(+) = (8S)-8-amino-7-oxononanoate + holo-[ACP] + CO2. It participates in cofactor biosynthesis; biotin biosynthesis. In terms of biological role, catalyzes the decarboxylative condensation of pimeloyl-[acyl-carrier protein] and L-alanine to produce 8-amino-7-oxononanoate (AON), [acyl-carrier protein], and carbon dioxide. The polypeptide is 8-amino-7-oxononanoate synthase (Helicobacter pylori (strain J99 / ATCC 700824) (Campylobacter pylori J99)).